The chain runs to 186 residues: Interferon beta-2 (186 aa).

An N-terminal signal peptide occupies residues 1-21 (MTHRCLLQMVLLLCFSTTALS). Cys52 and Cys161 are oxidised to a cystine. N-linked (GlcNAc...) asparagine glycosylation is found at Asn131 and Asn173.

It belongs to the alpha/beta interferon family. In terms of assembly, monomer.

The protein localises to the secreted. Has antiviral, antibacterial and anticancer activities. The polypeptide is Interferon beta-2 (IFNB2) (Bos taurus (Bovine)).